The primary structure comprises 82 residues: uncharacterized protein (82 aa).

The next 2 helical transmembrane spans lie at 22–39 (WASD…MFIA) and 46–65 (LKMG…TWVI).

Its subcellular location is the cell membrane. This is an uncharacterized protein from Bacillus subtilis (strain 168).